A 627-amino-acid polypeptide reads, in one-letter code: 1-deoxy-D-xylulose-5-phosphate synthase (627 aa).

Thiamine diphosphate contacts are provided by residues His-80 and 121 to 123; that span reads GHS. Asp-152 is a binding site for Mg(2+). Thiamine diphosphate contacts are provided by residues 153 to 154, Asn-181, Tyr-288, and Glu-370; that span reads GA. Asn-181 provides a ligand contact to Mg(2+).

It belongs to the transketolase family. DXPS subfamily. As to quaternary structure, homodimer. Mg(2+) is required as a cofactor. Thiamine diphosphate serves as cofactor.

It carries out the reaction D-glyceraldehyde 3-phosphate + pyruvate + H(+) = 1-deoxy-D-xylulose 5-phosphate + CO2. The protein operates within metabolic intermediate biosynthesis; 1-deoxy-D-xylulose 5-phosphate biosynthesis; 1-deoxy-D-xylulose 5-phosphate from D-glyceraldehyde 3-phosphate and pyruvate: step 1/1. In terms of biological role, catalyzes the acyloin condensation reaction between C atoms 2 and 3 of pyruvate and glyceraldehyde 3-phosphate to yield 1-deoxy-D-xylulose-5-phosphate (DXP). The sequence is that of 1-deoxy-D-xylulose-5-phosphate synthase from Vibrio atlanticus (strain LGP32) (Vibrio splendidus (strain Mel32)).